The following is a 229-amino-acid chain: MRILIVEDEPKTGMYLRKGLTEAGFIADWVEDGVTGLHQAETEEYDLIILDVMLPGHDGWTVLERLRRAHSTPVLFLTARDDVGDRVKGLELGADDYVVKPFDFVELVARVRSILRRGQARESTVLRIADLELDLTRRKATRQGDVVLLTAKEFALLWLLMRREGEILPRATIASQVWDMNFNSDTNVVDAAIRRLRSKIDDAYEPKLIHTVRGMGYVLEVRSASAPSR.

Residues 2 to 115 (RILIVEDEPK…ELVARVRSIL (114 aa)) enclose the Response regulatory domain. Position 51 is a 4-aspartylphosphate (D51). The segment at residues 123-221 (STVLRIADLE…VRGMGYVLEV (99 aa)) is a DNA-binding region (ompR/PhoB-type).

In terms of processing, phosphorylated by IrlS.

Member of the two-component regulatory system IrlR/IrlS. May be involved in invasion of eukaryotic cells and heavy-metal resistance. The polypeptide is Transcriptional activator protein IrlR (irlR) (Burkholderia pseudomallei (strain 1026b)).